The chain runs to 439 residues: uncharacterized protein (439 aa).

Residues 1 to 55 (MLEQVRIQKMVNGGYGLAHLSNGKVVLVEGAYPGEEVLIKTYREKRDFSFGKVVS) enclose the TRAM domain. Residues cysteine 68, cysteine 74, cysteine 77, and cysteine 149 each coordinate [4Fe-4S] cluster. 4 residues coordinate S-adenosyl-L-methionine: glutamine 272, tyrosine 301, glutamate 322, and aspartate 367. The active-site Nucleophile is cysteine 394.

It belongs to the class I-like SAM-binding methyltransferase superfamily. RNA M5U methyltransferase family.

This is an uncharacterized protein from Thermotoga maritima (strain ATCC 43589 / DSM 3109 / JCM 10099 / NBRC 100826 / MSB8).